The chain runs to 101 residues: Interleukin-8 (101 aa).

The first 22 residues, 1–22 (MTSKLAVALLAAFLLSAALCEG), serve as a signal peptide directing secretion. Arginine 27 bears the Citrulline mark. Disulfide bonds link cysteine 34/cysteine 61 and cysteine 36/cysteine 77.

The protein belongs to the intercrine alpha (chemokine CxC) family. In terms of assembly, homodimer. Interacts with TNFAIP6 (via Link domain); this interaction interferes with chemokine binding to glycosaminoglycans. In terms of processing, citrullination at Arg-27 prevents proteolysis, and dampens tissue inflammation, it also enhances leukocytosis, possibly through impaired chemokine clearance from the blood circulation.

It localises to the secreted. Chemotactic factor that mediates inflammatory response by attracting neutrophils, basophils, and T-cells to clear pathogens and protect the host from infection. Also plays an important role in neutrophil activation. Released in response to an inflammatory stimulus, exerts its effect by binding to the G-protein-coupled receptors CXCR1 and CXCR2, primarily found in neutrophils, monocytes and endothelial cells. G-protein heterotrimer (alpha, beta, gamma subunits) constitutively binds to CXCR1/CXCR2 receptor and activation by IL8 leads to beta and gamma subunits release from Galpha (GNAI2 in neutrophils) and activation of several downstream signaling pathways including PI3K and MAPK pathways. This Cercocebus atys (Sooty mangabey) protein is Interleukin-8 (CXCL8).